The sequence spans 222 residues: Cytidylate kinase (222 aa).

An ATP-binding site is contributed by Gly11 to Thr19.

It belongs to the cytidylate kinase family. Type 1 subfamily.

It is found in the cytoplasm. The catalysed reaction is CMP + ATP = CDP + ADP. It catalyses the reaction dCMP + ATP = dCDP + ADP. This is Cytidylate kinase from Ureaplasma urealyticum serovar 10 (strain ATCC 33699 / Western).